We begin with the raw amino-acid sequence, 157 residues long: Small heat shock protein ibp (157 aa).

In terms of domain architecture, sHSP spans 35 to 148 (EKPISDTPTY…KPKKISINVP (114 aa)).

Belongs to the small heat shock protein (HSP20) family.

This is Small heat shock protein ibp (ibp) from Buchnera aphidicola subsp. Acyrthosiphon pisum (strain APS) (Acyrthosiphon pisum symbiotic bacterium).